A 1193-amino-acid chain; its full sequence is Magnesium-chelatase subunit H (1193 aa).

Belongs to the Mg-chelatase subunit H family.

It catalyses the reaction protoporphyrin IX + Mg(2+) + ATP + H2O = Mg-protoporphyrin IX + ADP + phosphate + 3 H(+). It functions in the pathway porphyrin-containing compound metabolism; bacteriochlorophyll biosynthesis (light-independent). Involved in bacteriochlorophyll pigment biosynthesis; introduces a magnesium ion into protoporphyrin IX to yield Mg-protoroporphyrin IX. This Cereibacter sphaeroides (strain ATCC 17023 / DSM 158 / JCM 6121 / CCUG 31486 / LMG 2827 / NBRC 12203 / NCIMB 8253 / ATH 2.4.1.) (Rhodobacter sphaeroides) protein is Magnesium-chelatase subunit H (bchH).